A 309-amino-acid polypeptide reads, in one-letter code: Uridylate-specific endoribonuclease C (309 aa).

A signal peptide spans 1-22 (MASGYDFGWIPVLLSLFTLTDA). The region spanning 27-303 (VNQELSNIFN…IGTAYPKLLS (277 aa)) is the EndoU domain. 2 N-linked (GlcNAc...) asparagine glycosylation sites follow: asparagine 53 and asparagine 121. Active-site residues include histidine 181, histidine 197, and lysine 242.

The protein belongs to the ENDOU family. In terms of assembly, monomer. It depends on Mn(2+) as a cofactor.

Its subcellular location is the secreted. It catalyses the reaction ribonucleotidyl-uridine-RNA = a 5'-end dephospho-uridine-RNA + a 3'-end 2',3'-cyclophospho-ribonucleotide-RNA. Its function is as follows. Endoribonuclease that cleaves single-stranded RNAs at 5' of uridylates and releases a product with a 2',3'-cyclic phosphate at the 3'-end. The UU and GU sites are more efficiently cleaved than CU and AU sites. This is Uridylate-specific endoribonuclease C (endouc) from Danio rerio (Zebrafish).